A 475-amino-acid chain; its full sequence is Protein trichome birefringence-like 6 (475 aa).

Residues 14–34 (VLAFIITIISSAIVFFTFFSS) traverse the membrane as a helical; Signal-anchor for type II membrane protein segment. The short motif at 211–213 (GDS) is the GDS motif element. Residues 450–464 (DCSHWCLPGVPDTWN) carry the DCXHWCLPGXXDXWN motif motif.

The protein belongs to the PC-esterase family. TBL subfamily.

It is found in the membrane. May act as a bridging protein that binds pectin and other cell wall polysaccharides. Probably involved in maintaining esterification of pectins. May be involved in the specific O-acetylation of cell wall polymers. This is Protein trichome birefringence-like 6 (TBL6) from Arabidopsis thaliana (Mouse-ear cress).